The following is a 140-amino-acid chain: Auxin-responsive protein IAA26 (140 aa).

A disordered region spans residues 1–40; that stretch reads MASYGDDGVELTELTLGPPGASARRARRGRKNGHPPPSSS. The short motif at 14 to 18 is the EAR-like (transcriptional repression) element; sequence LTLGP. Residues 24 to 33 show a composition bias toward basic residues; the sequence is RRARRGRKNG. One can recognise a PB1 domain in the interval 45-130; it reads AYFVKVSMDG…SCKRMRVMRA (86 aa).

The protein belongs to the Aux/IAA family. Homodimers and heterodimers. Expressed in roots, seedlings and flowers.

Its subcellular location is the nucleus. In terms of biological role, aux/IAA proteins are short-lived transcriptional factors that function as repressors of early auxin response genes at low auxin concentrations. The protein is Auxin-responsive protein IAA26 (IAA26) of Oryza sativa subsp. japonica (Rice).